A 357-amino-acid chain; its full sequence is Mating-type protein MAT-1 (357 aa).

Residues 53–108 constitute a DNA-binding region (alpha box); that stretch reads RAKRPLNAFMAFRTYYLKLFPDTQQKNASGFLTQLWGGDPHRNKWALIAKVYSFLR.

It belongs to the MATALPHA1 family.

The protein resides in the nucleus. Functionally, mating type proteins are sequence specific DNA-binding proteins that act as master switches in fungal differentiation by controlling gene expression in a cell type-specific fashion. Transcriptional activator that induces the transcription of alpha-specific genes. The chain is Mating-type protein MAT-1 (MAT1) from Fusarium oxysporum (Fusarium vascular wilt).